Consider the following 571-residue polypeptide: Potassium-transporting ATPase potassium-binding subunit (571 aa).

Transmembrane regions (helical) follow at residues 5–25 (GWMQ…PLGG), 64–84 (LAYA…LYAL), 136–156 (GLTH…VALI), 179–199 (LYVL…QGMP), 220–240 (VGPV…GGFF), 254–274 (LSNF…TNVF), 285–305 (WAIL…TYWA), 330–350 (FGIA…CGAV), 375–395 (IIGG…VAIF), 421–441 (MLGI…ATVV), 488–508 (LAIG…AIAG), and 527–547 (GGLF…LTFF).

Belongs to the KdpA family. As to quaternary structure, the system is composed of three essential subunits: KdpA, KdpB and KdpC.

Its subcellular location is the cell inner membrane. Its function is as follows. Part of the high-affinity ATP-driven potassium transport (or Kdp) system, which catalyzes the hydrolysis of ATP coupled with the electrogenic transport of potassium into the cytoplasm. This subunit binds the periplasmic potassium ions and delivers the ions to the membrane domain of KdpB through an intramembrane tunnel. The polypeptide is Potassium-transporting ATPase potassium-binding subunit (Methylorubrum extorquens (strain PA1) (Methylobacterium extorquens)).